Reading from the N-terminus, the 137-residue chain is Putative pre-16S rRNA nuclease (137 aa).

It belongs to the YqgF nuclease family.

It is found in the cytoplasm. Its function is as follows. Could be a nuclease involved in processing of the 5'-end of pre-16S rRNA. The protein is Putative pre-16S rRNA nuclease of Anaeromyxobacter dehalogenans (strain 2CP-1 / ATCC BAA-258).